The sequence spans 304 residues: GTP cyclohydrolase FolE2 (304 aa).

The protein belongs to the GTP cyclohydrolase IV family.

It carries out the reaction GTP + H2O = 7,8-dihydroneopterin 3'-triphosphate + formate + H(+). The protein operates within cofactor biosynthesis; 7,8-dihydroneopterin triphosphate biosynthesis; 7,8-dihydroneopterin triphosphate from GTP: step 1/1. Converts GTP to 7,8-dihydroneopterin triphosphate. This chain is GTP cyclohydrolase FolE2, found in Chromohalobacter salexigens (strain ATCC BAA-138 / DSM 3043 / CIP 106854 / NCIMB 13768 / 1H11).